The chain runs to 200 residues: Probable molybdenum cofactor guanylyltransferase (200 aa).

Residues 9-11, Lys-21, Asp-69, and Asp-100 each bind GTP; that span reads LAG. A Mg(2+)-binding site is contributed by Asp-100.

The protein belongs to the MobA family. Mg(2+) is required as a cofactor.

Its subcellular location is the cytoplasm. The enzyme catalyses Mo-molybdopterin + GTP + H(+) = Mo-molybdopterin guanine dinucleotide + diphosphate. Its function is as follows. Transfers a GMP moiety from GTP to Mo-molybdopterin (Mo-MPT) cofactor (Moco or molybdenum cofactor) to form Mo-molybdopterin guanine dinucleotide (Mo-MGD) cofactor. The protein is Probable molybdenum cofactor guanylyltransferase of Bacillus cereus (strain AH820).